Reading from the N-terminus, the 193-residue chain is Small ribosomal subunit protein eS1 (193 aa).

The protein belongs to the eukaryotic ribosomal protein eS1 family.

In Sulfurisphaera tokodaii (strain DSM 16993 / JCM 10545 / NBRC 100140 / 7) (Sulfolobus tokodaii), this protein is Small ribosomal subunit protein eS1.